Reading from the N-terminus, the 429-residue chain is UDP-N-acetylglucosamine 1-carboxyvinyltransferase (429 aa).

22–23 (KN) serves as a coordination point for phosphoenolpyruvate. Arg102 serves as a coordination point for UDP-N-acetyl-alpha-D-glucosamine. The active-site Proton donor is the Cys126. Cys126 carries the 2-(S-cysteinyl)pyruvic acid O-phosphothioketal modification. UDP-N-acetyl-alpha-D-glucosamine-binding positions include 131 to 135 (RPVDL), Asp316, and Ile338.

Belongs to the EPSP synthase family. MurA subfamily.

The protein localises to the cytoplasm. It catalyses the reaction phosphoenolpyruvate + UDP-N-acetyl-alpha-D-glucosamine = UDP-N-acetyl-3-O-(1-carboxyvinyl)-alpha-D-glucosamine + phosphate. Its pathway is cell wall biogenesis; peptidoglycan biosynthesis. In terms of biological role, cell wall formation. Adds enolpyruvyl to UDP-N-acetylglucosamine. The protein is UDP-N-acetylglucosamine 1-carboxyvinyltransferase of Nitrobacter hamburgensis (strain DSM 10229 / NCIMB 13809 / X14).